We begin with the raw amino-acid sequence, 506 residues long: MTSSRPSGRDSTGWQETVSNTSPKLVNAMEAARAGAAEVGRVGRRFLYRIWDWEPVNNRTINEPVWCLGCSYTLDIKQYGSPLSSSSLSQLTADTPPLDKSQLAATHQHQDFNGVRTTATATCLSDTSMSAAPTGSQLGSFDTVPDSVTSGYDSALAYEEPGQDGGWPPAFLDDFESRIWMTYRTDFALIPRSSDPQASSALSFAMRIKTTFSDLTGFSSDTGWGCMIRSGQSLLANAILIARLGREWRRGTDLDAEKDIIALFADDPRAPYSLHNFVKYGATACGKYPGEWFGPSATARCIQALADEKQSGLRVYSTGDLPDVYEDSFMAVANPDGRGFQPTLILVCTRLGIDKINQVYEEALISTLQLPQSIGIAGGRPSSSHYFVGVQGQRLFYLDPHHPRPALPYREDPRGYTAEELDTCHTRRLRQLHIGDMDPSMLIGFLIKDEDDWDTWKSSVKHVQGKSIISVSPYDPARGQGGGRAEAIDEVETLESDDDGEPALGA.

Residues 1–21 (MTSSRPSGRDSTGWQETVSNT) are disordered. The active-site Nucleophile is Cys-226. Catalysis depends on residues Asp-399 and His-401.

This sequence belongs to the peptidase C54 family.

The protein localises to the cytoplasm. Its subcellular location is the nucleus. It is found in the preautophagosomal structure. It catalyses the reaction [protein]-C-terminal L-amino acid-glycyl-phosphatidylethanolamide + H2O = [protein]-C-terminal L-amino acid-glycine + a 1,2-diacyl-sn-glycero-3-phosphoethanolamine. Its function is as follows. Cysteine protease that plays a key role in cytoplasm to vacuole transport (Cvt) and autophagy by mediating both proteolytic activation and delipidation of ATG8. Required for selective autophagic degradation of the nucleus (nucleophagy) as well as for mitophagy which contributes to regulate mitochondrial quantity and quality by eliminating the mitochondria to a basal level to fulfill cellular energy requirements and preventing excess ROS production. The protease activity is required for proteolytic activation of ATG8: cleaves the C-terminal amino acid of ATG8 to reveal a C-terminal glycine. ATG8 ubiquitin-like activity requires the exposure of the glycine at the C-terminus for its conjugation to phosphatidylethanolamine (PE) and its insertion to membranes, which is necessary for autophagy. The ATG8-PE conjugate mediates tethering between adjacent membranes and stimulates membrane hemifusion, leading to expansion of the autophagosomal membrane during autophagy. In addition to the protease activity, also catalyzes deconjugation of PE-conjugated forms of ATG8 during macroautophagy: ATG8 delipidation is required to release the protein from membranes, which facilitates multiple events during macroautophagy, and especially for efficient autophagosome biogenesis, the assembly of ATG9-containing tubulovesicular clusters into phagophores/autophagosomes, and for the disassembly of PAS-associated ATG components. ATG8 delipidation by ATG4 also recycles ATG8-PE generated on inappropriate membranes to maintain a reservoir of unlipidated ATG8 that is required for autophagosome formation at the PAS. This is Cysteine protease 1 (cpr-1) from Neurospora crassa (strain ATCC 24698 / 74-OR23-1A / CBS 708.71 / DSM 1257 / FGSC 987).